A 327-amino-acid chain; its full sequence is Small ribosomal subunit protein RACK1 (327 aa).

7 WD repeats span residues 13 to 44 (AHTD…IVWK), 61 to 91 (GHSH…RLWD), 103 to 133 (GHTK…KLWN), 148 to 180 (GHRD…KVWN), 192 to 222 (GHTG…LLWD), 233 to 262 (EANS…KIWD), and 293 to 323 (RKVI…RVWG).

This sequence belongs to the WD repeat G protein beta family. Ribosomal protein RACK1 subfamily.

The polypeptide is Small ribosomal subunit protein RACK1 (GB1) (Brassica napus (Rape)).